A 75-amino-acid polypeptide reads, in one-letter code: Large ribosomal subunit protein bL31 (75 aa).

Part of the 50S ribosomal subunit.

Binds the 23S rRNA. This Rhodopseudomonas palustris (strain ATCC BAA-98 / CGA009) protein is Large ribosomal subunit protein bL31.